A 485-amino-acid polypeptide reads, in one-letter code: Glutamyl-tRNA(Gln) amidotransferase subunit A (485 aa).

Residues Lys76 and Ser151 each act as charge relay system in the active site. The active-site Acyl-ester intermediate is the Ser175.

This sequence belongs to the amidase family. GatA subfamily. Heterotrimer of A, B and C subunits.

The enzyme catalyses L-glutamyl-tRNA(Gln) + L-glutamine + ATP + H2O = L-glutaminyl-tRNA(Gln) + L-glutamate + ADP + phosphate + H(+). Functionally, allows the formation of correctly charged Gln-tRNA(Gln) through the transamidation of misacylated Glu-tRNA(Gln) in organisms which lack glutaminyl-tRNA synthetase. The reaction takes place in the presence of glutamine and ATP through an activated gamma-phospho-Glu-tRNA(Gln). This Chlorobium luteolum (strain DSM 273 / BCRC 81028 / 2530) (Pelodictyon luteolum) protein is Glutamyl-tRNA(Gln) amidotransferase subunit A.